Reading from the N-terminus, the 199-residue chain is Holliday junction branch migration complex subunit RuvA (199 aa).

The segment at 1–65 (MIGWLHGQII…EDALLLYGFL (65 aa)) is domain I. Positions 66–144 (DKEERSLFRS…QFDGSVSDTF (79 aa)) are domain II. Residues 144–148 (FQKQA) are flexible linker. The domain III stretch occupies residues 149-199 (GSTHSQQEAISALEALGYKPQEAWKVVNKIDNGNKSCEQLIREALQILSSR).

Belongs to the RuvA family. As to quaternary structure, homotetramer. Forms an RuvA(8)-RuvB(12)-Holliday junction (HJ) complex. HJ DNA is sandwiched between 2 RuvA tetramers; dsDNA enters through RuvA and exits via RuvB. An RuvB hexamer assembles on each DNA strand where it exits the tetramer. Each RuvB hexamer is contacted by two RuvA subunits (via domain III) on 2 adjacent RuvB subunits; this complex drives branch migration. In the full resolvosome a probable DNA-RuvA(4)-RuvB(12)-RuvC(2) complex forms which resolves the HJ.

Its subcellular location is the cytoplasm. Its function is as follows. The RuvA-RuvB-RuvC complex processes Holliday junction (HJ) DNA during genetic recombination and DNA repair, while the RuvA-RuvB complex plays an important role in the rescue of blocked DNA replication forks via replication fork reversal (RFR). RuvA specifically binds to HJ cruciform DNA, conferring on it an open structure. The RuvB hexamer acts as an ATP-dependent pump, pulling dsDNA into and through the RuvAB complex. HJ branch migration allows RuvC to scan DNA until it finds its consensus sequence, where it cleaves and resolves the cruciform DNA. This chain is Holliday junction branch migration complex subunit RuvA, found in Legionella pneumophila (strain Paris).